The primary structure comprises 253 residues: Vitamin B12 import ATP-binding protein BtuD (253 aa).

The ABC transporter domain maps to Leu-4–Asp-236. Position 32–39 (Gly-32–Ser-39) interacts with ATP.

This sequence belongs to the ABC transporter superfamily. Vitamin B12 importer (TC 3.A.1.13.1) family. As to quaternary structure, the complex is composed of two ATP-binding proteins (BtuD), two transmembrane proteins (BtuC) and a solute-binding protein (BtuF).

It localises to the cell inner membrane. It carries out the reaction an R-cob(III)alamin(out) + ATP + H2O = an R-cob(III)alamin(in) + ADP + phosphate + H(+). Functionally, part of the ABC transporter complex BtuCDF involved in vitamin B12 import. Responsible for energy coupling to the transport system. This Yersinia enterocolitica serotype O:8 / biotype 1B (strain NCTC 13174 / 8081) protein is Vitamin B12 import ATP-binding protein BtuD.